The chain runs to 381 residues: Homoserine O-succinyltransferase (381 aa).

In terms of domain architecture, AB hydrolase-1 spans 45–360; the sequence is NAVLVCHALN…PHGHDAFLLD (316 aa). Catalysis depends on Ser-151, which acts as the Nucleophile. Arg-221 lines the substrate pocket. Active-site residues include Asp-321 and His-354. Asp-355 is a binding site for substrate.

The protein belongs to the AB hydrolase superfamily. MetX family. In terms of assembly, homodimer.

The protein resides in the cytoplasm. It carries out the reaction L-homoserine + succinyl-CoA = O-succinyl-L-homoserine + CoA. The protein operates within amino-acid biosynthesis; L-methionine biosynthesis via de novo pathway; O-succinyl-L-homoserine from L-homoserine: step 1/1. Functionally, transfers a succinyl group from succinyl-CoA to L-homoserine, forming succinyl-L-homoserine. The polypeptide is Homoserine O-succinyltransferase (Paraburkholderia xenovorans (strain LB400)).